The chain runs to 444 residues: Transcription activator AKTR-1 (444 aa).

The segment at residues C16–C43 is a DNA-binding region (zn(2)-C6 fungal-type). Residues R49–Q87 form a disordered region. Over residues R50–R59 the composition is skewed to basic residues. A compositionally biased stretch (polar residues) spans P76–Q87.

It is found in the nucleus. Its function is as follows. Transcription factor that regulates the expression of the gene clusters that mediate the biosynthesis of the host-selective toxins (HSTs) AK-toxins responsible for Japanese pear black spot disease by the Japanese pear pathotype. AK-toxins are esters of 9,10-epoxy 8-hydroxy 9-methyldecatrienoic acid (EDA). On cellular level, AK-toxins affect plasma membrane of susceptible cells and cause a sudden increase in loss of K(+) after a few minutes of toxin treatment. This chain is Transcription activator AKTR-1, found in Alternaria alternata (Alternaria rot fungus).